The primary structure comprises 938 residues: Isoleucine--tRNA ligase (938 aa).

A 'HIGH' region motif is present at residues 58 to 68 (PYANGHIHLGT). E565 provides a ligand contact to L-isoleucyl-5'-AMP. Residues 606-610 (KMSKS) carry the 'KMSKS' region motif. An ATP-binding site is contributed by K609. C905, C908, C925, and C928 together coordinate Zn(2+).

The protein belongs to the class-I aminoacyl-tRNA synthetase family. IleS type 1 subfamily. As to quaternary structure, monomer. Zn(2+) serves as cofactor.

It is found in the cytoplasm. The enzyme catalyses tRNA(Ile) + L-isoleucine + ATP = L-isoleucyl-tRNA(Ile) + AMP + diphosphate. Functionally, catalyzes the attachment of isoleucine to tRNA(Ile). As IleRS can inadvertently accommodate and process structurally similar amino acids such as valine, to avoid such errors it has two additional distinct tRNA(Ile)-dependent editing activities. One activity is designated as 'pretransfer' editing and involves the hydrolysis of activated Val-AMP. The other activity is designated 'posttransfer' editing and involves deacylation of mischarged Val-tRNA(Ile). This is Isoleucine--tRNA ligase from Nitratidesulfovibrio vulgaris (strain DSM 19637 / Miyazaki F) (Desulfovibrio vulgaris).